The primary structure comprises 169 residues: Putative phosphoesterase SE_0715 (169 aa).

The active-site Proton donor is H34. 2 consecutive short sequence motifs (HXTX) follow at residues 34 to 37 (HITI) and 115 to 118 (HFTI). The active-site Proton acceptor is H115.

The protein belongs to the 2H phosphoesterase superfamily. YjcG family.

The polypeptide is Putative phosphoesterase SE_0715 (Staphylococcus epidermidis (strain ATCC 12228 / FDA PCI 1200)).